We begin with the raw amino-acid sequence, 261 residues long: Sulfur carrier protein FdhD (261 aa).

The active-site Cysteine persulfide intermediate is the Cys-105. 245–250 (FIRGDR) contacts Mo-bis(molybdopterin guanine dinucleotide).

This sequence belongs to the FdhD family.

It is found in the cytoplasm. Its function is as follows. Required for formate dehydrogenase (FDH) activity. Acts as a sulfur carrier protein that transfers sulfur from IscS to the molybdenum cofactor prior to its insertion into FDH. This Listeria monocytogenes serotype 4b (strain F2365) protein is Sulfur carrier protein FdhD.